Here is a 212-residue protein sequence, read N- to C-terminus: Leucine efflux protein (212 aa).

Transmembrane regions (helical) follow at residues 12–32, 49–69, 71–91, 122–142, 153–173, and 188–208; these read TYLVGAIFIVLVPGPNTLFVL, GVFIGDAVLMFLAWAGVATLI, TTPILFNIVRYLGAFYLLYLG, ILSLTNPKAILFYVSFFVQFI, FFILATTLELVSFCYLSFLII, and LAKVGNSLIGLMFVGFAARLA.

Belongs to the Rht family.

The protein localises to the cell inner membrane. It catalyses the reaction L-leucine(in) + H(+)(out) = L-leucine(out) + H(+)(in). Functionally, exporter of leucine. The sequence is that of Leucine efflux protein (leuE) from Shigella sonnei (strain Ss046).